Here is a 389-residue protein sequence, read N- to C-terminus: MSTQKKTINFLQEFSIPLILGVLIALVWANLAPENYHHFVHNEIIGHISLHFFVNDIFMVFFFAMAAIEITQSLLPGGSLNPLKRAINPLMATLGGVLGPALVFLGLNALIGSPEFARGWGIPTATDIALAWLVARVVFGAQHAAVSFLLLLAIVDDGIGLMIIAFFYPDPANPVAPLWLLLTVAGMLVAYLLRRKNVQSYWPYIILGGILSWAGLYLAHIHPALALVFIVPFLPHPPREEFGLFEDDPQDHSTLKTFEHEWKIFVDFGLLLFGLTNAGVEFSEINTLTWLVLIALVGGKTIGIFLMGSLATVIGFPFPKGMGYKELLVAGVIAAMGLTVALFVSGVAFIDPGLQGAAKMGALFSAVAAVIAFALGKVLGIKKVKDTQA.

A run of 10 helical transmembrane segments spans residues 8–28, 48–68, 91–111, 119–139, 173–193, 214–234, 262–282, 288–308, 327–347, and 361–381; these read INFL…ALVW, ISLH…MAAI, MATL…NALI, GWGI…RVVF, NPVA…AYLL, AGLY…VPFL, WKIF…GVEF, LTWL…FLMG, LLVA…VSGV, and GALF…VLGI.

Belongs to the NhaA Na(+)/H(+) (TC 2.A.33) antiporter family.

Its subcellular location is the cell membrane. The enzyme catalyses Na(+)(in) + 2 H(+)(out) = Na(+)(out) + 2 H(+)(in). Na(+)/H(+) antiporter that extrudes sodium in exchange for external protons. The chain is Na(+)/H(+) antiporter NhaA from Desulfitobacterium hafniense (strain DSM 10664 / DCB-2).